The primary structure comprises 93 residues: Small ribosomal subunit protein uS19 (93 aa).

Belongs to the universal ribosomal protein uS19 family.

In terms of biological role, protein S19 forms a complex with S13 that binds strongly to the 16S ribosomal RNA. In Symbiobacterium thermophilum (strain DSM 24528 / JCM 14929 / IAM 14863 / T), this protein is Small ribosomal subunit protein uS19.